The primary structure comprises 1094 residues: AP-3 complex subunit beta-1 (1094 aa).

The span at 1-11 shows a compositional bias: polar residues; the sequence is MSSNSFPYNEQ. 2 disordered regions span residues 1-31 and 268-292; these read MSSN…ISPS and DNGK…KPYT. A phosphoserine mark is found at S276 and S609. The tract at residues 662–811 is disordered; it reads PAGKAKQENS…EKKTKQDRTP (150 aa). Over residues 666 to 677 the composition is skewed to basic and acidic residues; it reads AKQENSAKKFYS. Acidic residues-rich tracts occupy residues 678–696 and 705–726; these read ESEE…ESES and ESGE…EQDS. Composition is skewed to basic and acidic residues over residues 727-738 and 748-764; these read ESGRESGLENKR and GKSD…KSKT. S750 and S752 each carry phosphoserine. The segment covering 765 to 777 has biased composition (low complexity); it reads SDSSNDESSSIED. Residues 778–791 are compositionally biased toward acidic residues; sequence SSSDSESESEPESE. A compositionally biased stretch (basic and acidic residues) spans 792 to 811; it reads SESRRVTKEKEKKTKQDRTP.

This sequence belongs to the adaptor complexes large subunit family. In terms of assembly, adaptor protein complex 3 (AP-3) is a heterotetramer composed of two large adaptins (delta-type subunit AP3D1 and beta-type subunit AP3B1 or AP3B2), a medium adaptin (mu-type subunit AP3M1 or AP3M2) and a small adaptin (sigma-type subunit APS1 or AP3S2). AP-3 associates with the BLOC-1 complex. Interacts with KIF3A; interaction is direct; interaction is impaired by pyrophosphorylation of AP3B1. In terms of processing, phosphorylated on serine residues. Pyrophosphorylation by 5-diphosphoinositol pentakisphosphate (5-IP7) impairs interaction with KIF3A. Serine pyrophosphorylation is achieved by Mg(2+)-dependent, but enzyme independent transfer of a beta-phosphate from a inositol pyrophosphate to a pre-phosphorylated serine residue. Ubiquitously expressed.

Its subcellular location is the cytoplasmic vesicle. The protein resides in the clathrin-coated vesicle membrane. It is found in the golgi apparatus. Subunit of non-clathrin- and clathrin-associated adaptor protein complex 3 (AP-3) that plays a role in protein sorting in the late-Golgi/trans-Golgi network (TGN) and/or endosomes. The AP complexes mediate both the recruitment of clathrin to membranes and the recognition of sorting signals within the cytosolic tails of transmembrane cargo molecules. AP-3 appears to be involved in the sorting of a subset of transmembrane proteins targeted to lysosomes and lysosome-related organelles. In concert with the BLOC-1 complex, AP-3 is required to target cargos into vesicles assembled at cell bodies for delivery into neurites and nerve terminals. The protein is AP-3 complex subunit beta-1 (AP3B1) of Homo sapiens (Human).